We begin with the raw amino-acid sequence, 457 residues long: Bifunctional protein GlmU (457 aa).

Residues 1–230 (MPLSLPLHIV…AQEVEGVNDL (230 aa)) are pyrophosphorylase. UDP-N-acetyl-alpha-D-glucosamine-binding positions include 12–15 (LAAG), K26, Q78, 83–84 (GT), 105–107 (YGD), G140, E155, N170, and N228. D107 serves as a coordination point for Mg(2+). N228 is a binding site for Mg(2+). Residues 231-251 (WQLTQLERAWQIRAARALCLQ) are linker. An N-acetyltransferase region spans residues 252-457 (GARVADPARL…DGWQRPKKKT (206 aa)). The UDP-N-acetyl-alpha-D-glucosamine site is built by R334 and K352. The active-site Proton acceptor is the H364. 2 residues coordinate UDP-N-acetyl-alpha-D-glucosamine: Y367 and N378. Acetyl-CoA-binding positions include A381, 387–388 (NY), S406, A424, and R441.

This sequence in the N-terminal section; belongs to the N-acetylglucosamine-1-phosphate uridyltransferase family. The protein in the C-terminal section; belongs to the transferase hexapeptide repeat family. Homotrimer. Mg(2+) is required as a cofactor.

It localises to the cytoplasm. It carries out the reaction alpha-D-glucosamine 1-phosphate + acetyl-CoA = N-acetyl-alpha-D-glucosamine 1-phosphate + CoA + H(+). The enzyme catalyses N-acetyl-alpha-D-glucosamine 1-phosphate + UTP + H(+) = UDP-N-acetyl-alpha-D-glucosamine + diphosphate. It functions in the pathway nucleotide-sugar biosynthesis; UDP-N-acetyl-alpha-D-glucosamine biosynthesis; N-acetyl-alpha-D-glucosamine 1-phosphate from alpha-D-glucosamine 6-phosphate (route II): step 2/2. It participates in nucleotide-sugar biosynthesis; UDP-N-acetyl-alpha-D-glucosamine biosynthesis; UDP-N-acetyl-alpha-D-glucosamine from N-acetyl-alpha-D-glucosamine 1-phosphate: step 1/1. Its pathway is bacterial outer membrane biogenesis; LPS lipid A biosynthesis. In terms of biological role, catalyzes the last two sequential reactions in the de novo biosynthetic pathway for UDP-N-acetylglucosamine (UDP-GlcNAc). The C-terminal domain catalyzes the transfer of acetyl group from acetyl coenzyme A to glucosamine-1-phosphate (GlcN-1-P) to produce N-acetylglucosamine-1-phosphate (GlcNAc-1-P), which is converted into UDP-GlcNAc by the transfer of uridine 5-monophosphate (from uridine 5-triphosphate), a reaction catalyzed by the N-terminal domain. The chain is Bifunctional protein GlmU from Xylella fastidiosa (strain M23).